The primary structure comprises 525 residues: Glutamate synthase large subunit-like protein YerD (525 aa).

A helical membrane pass occupies residues 4-24; the sequence is IIIALIAFIIGIIAIPIVLFA.

Belongs to the glutamate synthase family.

It localises to the cell membrane. This Bacillus subtilis (strain 168) protein is Glutamate synthase large subunit-like protein YerD (yerD).